The chain runs to 97 residues: Co-chaperonin GroES (97 aa).

Belongs to the GroES chaperonin family. Heptamer of 7 subunits arranged in a ring. Interacts with the chaperonin GroEL.

The protein localises to the cytoplasm. Together with the chaperonin GroEL, plays an essential role in assisting protein folding. The GroEL-GroES system forms a nano-cage that allows encapsulation of the non-native substrate proteins and provides a physical environment optimized to promote and accelerate protein folding. GroES binds to the apical surface of the GroEL ring, thereby capping the opening of the GroEL channel. The chain is Co-chaperonin GroES from Ectopseudomonas mendocina (strain ymp) (Pseudomonas mendocina).